The following is a 235-amino-acid chain: Sugar fermentation stimulation protein homolog (235 aa).

This sequence belongs to the SfsA family.

The sequence is that of Sugar fermentation stimulation protein homolog from Roseobacter denitrificans (strain ATCC 33942 / OCh 114) (Erythrobacter sp. (strain OCh 114)).